An 859-amino-acid chain; its full sequence is Cadherin-related family member 1 (859 aa).

The first 21 residues, 1-21 (MRRGPRVALVLGLLRIYLAQA), serve as a signal peptide directing secretion. Residues 22 to 701 (NFAPHFFDNG…LIQTKDNPMK (680 aa)) lie on the Extracellular side of the membrane. Cadherin domains are found at residues 36-135 (NGNM…APRF), 136-247 (IQEP…APIF), 248-354 (VGTP…PPTF), 360-473 (PQNK…VPKF), 474-577 (TSHY…YPQF), and 569-691 (DVND…MAAF). Asn58 and Asn89 each carry an N-linked (GlcNAc...) asparagine glycan. Asn288 is a glycosylation site (N-linked (GlcNAc...) asparagine). The helical transmembrane segment at 702–722 (AVGVLAGVMAIVVAITVLIST) threads the bilayer. The Cytoplasmic segment spans residues 723–859 (ATFWRNKKSN…KKSLDNKAYI (137 aa)). Residues 793-838 (PALPPPPKMASSMVAQQTVPTVSGSLTPQPSPQLPTPKTLGGPVQS) form a disordered region. The segment covering 805-816 (MVAQQTVPTVSG) has biased composition (polar residues).

Interacts with PROM1. Undergoes proteolytic cleavage; produces a soluble 95 kDa N-terminal fragment and a 25 kDa cell-associated C-terminal fragment. As to expression, expressed in cone and rod photoreceptor cells (at protein level). Expressed in photoreceptor cells of the outer nuclear layer of the retina. Expressed in mitral and tufted cells in the olfactory bulb.

It localises to the cell membrane. Its function is as follows. Potential calcium-dependent cell-adhesion protein. May be required for the structural integrity of the outer segment (OS) of photoreceptor cells. This is Cadherin-related family member 1 (Cdhr1) from Mus musculus (Mouse).